The primary structure comprises 427 residues: Trigger factor (427 aa).

The 86-residue stretch at Gly-163–Pro-248 folds into the PPIase FKBP-type domain.

It belongs to the FKBP-type PPIase family. Tig subfamily.

Its subcellular location is the cytoplasm. It catalyses the reaction [protein]-peptidylproline (omega=180) = [protein]-peptidylproline (omega=0). Its function is as follows. Involved in protein export. Acts as a chaperone by maintaining the newly synthesized protein in an open conformation. Functions as a peptidyl-prolyl cis-trans isomerase. The sequence is that of Trigger factor from Streptococcus gordonii (strain Challis / ATCC 35105 / BCRC 15272 / CH1 / DL1 / V288).